We begin with the raw amino-acid sequence, 191 residues long: Probable GTP-binding protein EngB (191 aa).

The EngB-type G domain maps to 13 to 189 (DRLEVAFAGR…RAEIVALLPD (177 aa)). Residues 21-28 (GRSNVGKS), 48-52 (GRTRE), 67-70 (DLPG), 134-137 (TKTD), and 168-170 (TSS) each bind GTP. Mg(2+) is bound by residues Ser28 and Thr50.

This sequence belongs to the TRAFAC class TrmE-Era-EngA-EngB-Septin-like GTPase superfamily. EngB GTPase family. Mg(2+) is required as a cofactor.

Its function is as follows. Necessary for normal cell division and for the maintenance of normal septation. In Maricaulis maris (strain MCS10) (Caulobacter maris), this protein is Probable GTP-binding protein EngB.